Consider the following 708-residue polypeptide: MFNFFAAAPKGFEYALAKELETLGAENVRESVAGVYFSASLAQGYQITLWTRLASRIVLILFTGECQSAEQLYNAAYTIDWPSHFSNRSTFSIDFHGTGGFINNSQFGALKIKDAVVDRFRDDDLSRPDVVKGHPDMRIDAHYGRGKITIGINFSGAALHQRGYRGNTGEAPLKENLAANMLYRSGWADNPVTLLDPFCGSGTVLIEAALMACDIAPGLMRERFGFEHWRRHDQALWQQVIEEAKARASLGKTRCQLKFYGSDIDSRVVALAKRNANSAGVFDFIDFKVANALNLEPPVAEGMVLTNPPYGERLGNVTSLLQLYFQLGEKFKQSYGGWKLGLLCSDMELVSSLKLKADKQMKMYNGALECAFNLYTLHATSTRRDIPVDTTGQGGEIAAPFANRLKKNLKQLEKWAKREGIDSYRLYDADIPEYNVAVDRYLDYVVVQEYAAPSAIPEAVTKRRLTDVLLALPRALGIDPDKIVLKTRERQKGTNQYQKLDGEKLELVTTEYGCSFKLNLTDYLDTGLFLDHRLTRKLVGEKAKNRDVLNLFAYTGSASVHAGKGGAKSVTTVDMSNTYLNWAKDNFMLNGLIGRQYQFEQADCLQWIRDCERQFDLIFIDPPTFSNSKRMEDSFDVQRDHVDLLASLKKLLRPGGEIVFSNNKRKFKMDMEALAAAGLKAVNIDDKVLPMDYARNPQIHNCWVVTHG.

In terms of domain architecture, THUMP spans 43-154 (QGYQITLWTR…RGKITIGINF (112 aa)).

This sequence belongs to the methyltransferase superfamily. RlmKL family.

It localises to the cytoplasm. The enzyme catalyses guanosine(2445) in 23S rRNA + S-adenosyl-L-methionine = N(2)-methylguanosine(2445) in 23S rRNA + S-adenosyl-L-homocysteine + H(+). It carries out the reaction guanosine(2069) in 23S rRNA + S-adenosyl-L-methionine = N(2)-methylguanosine(2069) in 23S rRNA + S-adenosyl-L-homocysteine + H(+). Functionally, specifically methylates the guanine in position 2445 (m2G2445) and the guanine in position 2069 (m7G2069) of 23S rRNA. The chain is Ribosomal RNA large subunit methyltransferase K/L from Shewanella amazonensis (strain ATCC BAA-1098 / SB2B).